The following is a 73-amino-acid chain: RNA-binding protein Hfq (73 aa).

The Sm domain occupies 8 to 68 (DQFLNQIRKE…ISTFAPQKNV (61 aa)).

The protein belongs to the Hfq family. Homohexamer.

In terms of biological role, RNA chaperone that binds small regulatory RNA (sRNAs) and mRNAs to facilitate mRNA translational regulation in response to envelope stress, environmental stress and changes in metabolite concentrations. Also binds with high specificity to tRNAs. In Bacillus subtilis (strain 168), this protein is RNA-binding protein Hfq.